Here is a 230-residue protein sequence, read N- to C-terminus: Urease accessory protein UreF (230 aa).

This sequence belongs to the UreF family. In terms of assembly, ureD, UreF and UreG form a complex that acts as a GTP-hydrolysis-dependent molecular chaperone, activating the urease apoprotein by helping to assemble the nickel containing metallocenter of UreC. The UreE protein probably delivers the nickel.

It localises to the cytoplasm. Required for maturation of urease via the functional incorporation of the urease nickel metallocenter. In Chromohalobacter salexigens (strain ATCC BAA-138 / DSM 3043 / CIP 106854 / NCIMB 13768 / 1H11), this protein is Urease accessory protein UreF.